Here is a 468-residue protein sequence, read N- to C-terminus: Lysosomal dipeptide transporter MFSD1 (468 aa).

Positions 1–25 are disordered; that stretch reads MEDEEEEARALLPGGSDEAGRETRA. The Dileucine internalization motif motif lies at 11-12; it reads LL. The next 12 membrane-spanning stretches (helical) occupy residues 42–62, 86–106, 116–136, 138–158, 173–194, 218–238, 270–290, 307–327, 334–354, 364–384, 395–415, and 421–441; these read LAHR…SYFC, LLYA…GFLI, TIIF…GGIF, AFWL…SLAV, LNLV…NMNL, LMIG…LAYL, WLIF…IGLV, AINS…GLLV, IIWV…LAFT, LLGL…AFVV, FMQS…GMIL, and LFLE…VVLL.

The protein belongs to the major facilitator superfamily. As to quaternary structure, homodimer. Interacts with lysosomal protein GLMP (via lumenal domain); the interaction starts while both proteins are still in the endoplasmic reticulum and is required for stabilization of MFSD1 in lysosomes but has no direct effect on its targeting to lysosomes or transporter activity.

Its subcellular location is the lysosome membrane. The catalysed reaction is L-alpha-aminoacyl-L-arginine(out) = L-alpha-aminoacyl-L-arginine(in). The enzyme catalyses L-arginyl-L-alpha-amino acid(out) = L-arginyl-L-alpha-amino acid(in). It carries out the reaction L-arginyl-glycine(out) = L-arginyl-glycine(in). It catalyses the reaction L-alpha-aminoacyl-L-lysine(out) = L-alpha-aminoacyl-L-lysine(in). The catalysed reaction is L-aspartyl-L-lysine(out) = L-aspartyl-L-lysine(in). The enzyme catalyses L-alanyl-L-lysine(out) = L-alanyl-L-lysine(in). It carries out the reaction L-lysyl-L-alpha-amino acid(out) = L-lysyl-L-alpha-amino acid(in). It catalyses the reaction L-lysyl-L-alanine(out) = L-lysyl-L-alanine(in). The catalysed reaction is L-lysyl-L-lysine(out) = L-lysyl-L-lysine(in). The enzyme catalyses L-lysyl-glycine(out) = L-lysyl-glycine(in). It carries out the reaction L-alpha-aminoacyl-L-histidine(out) = L-alpha-aminoacyl-L-histidine(in). It catalyses the reaction L-histidyl-L-alpha-amino acid(out) = L-histidyl-L-alpha-amino acid(in). The catalysed reaction is L-histidyl-glycine(out) = L-histidyl-glycine(in). Lysosomal dipeptide uniporter that selectively exports lysine, arginine or histidine-containing dipeptides with a net positive charge from the lysosome lumen into the cytosol. Could play a role in a specific type of protein O-glycosylation indirectly regulating macrophages migration and tissue invasion. Also essential for liver homeostasis. In Bos taurus (Bovine), this protein is Lysosomal dipeptide transporter MFSD1.